Reading from the N-terminus, the 142-residue chain is DNA-directed RNA polymerase subunit omega (142 aa).

The interval 93–142 (AWSVPEAGGDEGGDASELLDDEGEGAAAGAEPDFSEMDVPLADLADEDKI) is disordered. Acidic residues predominate over residues 100–116 (GGDEGGDASELLDDEGE).

This sequence belongs to the RNA polymerase subunit omega family. As to quaternary structure, the RNAP catalytic core consists of 2 alpha, 1 beta, 1 beta' and 1 omega subunit. When a sigma factor is associated with the core the holoenzyme is formed, which can initiate transcription.

The catalysed reaction is RNA(n) + a ribonucleoside 5'-triphosphate = RNA(n+1) + diphosphate. In terms of biological role, promotes RNA polymerase assembly. Latches the N- and C-terminal regions of the beta' subunit thereby facilitating its interaction with the beta and alpha subunits. The polypeptide is DNA-directed RNA polymerase subunit omega (Rhodospirillum centenum (strain ATCC 51521 / SW)).